We begin with the raw amino-acid sequence, 343 residues long: Heat-inducible transcription repressor HrcA (343 aa).

It belongs to the HrcA family.

Negative regulator of class I heat shock genes (grpE-dnaK-dnaJ and groELS operons). Prevents heat-shock induction of these operons. In Mycobacterium ulcerans (strain Agy99), this protein is Heat-inducible transcription repressor HrcA.